Reading from the N-terminus, the 664-residue chain is DNA topoisomerase 4 subunit B (664 aa).

ATP is bound by residues Y7, N47, D74, 114–120, and K341; that span reads GLHGVGA. The interval 386–418 is disordered; it reads REAARKAREDARSGKKNKRKDTLLSGKLTPAQS. The span at 387-398 shows a compositional bias: basic and acidic residues; that stretch reads EAARKAREDARS. The Toprim domain occupies 424 to 538; it reads NELYLVEGDS…AGRVFIALPP (115 aa). E430, D503, and D505 together coordinate Mg(2+).

The protein belongs to the type II topoisomerase family. ParE type 2 subfamily. In terms of assembly, heterotetramer composed of ParC and ParE. It depends on Mg(2+) as a cofactor. Mn(2+) serves as cofactor. The cofactor is Ca(2+).

The enzyme catalyses ATP-dependent breakage, passage and rejoining of double-stranded DNA.. Functionally, topoisomerase IV is essential for chromosome segregation. It relaxes supercoiled DNA. Performs the decatenation events required during the replication of a circular DNA molecule. This Staphylococcus epidermidis (strain ATCC 35984 / DSM 28319 / BCRC 17069 / CCUG 31568 / BM 3577 / RP62A) protein is DNA topoisomerase 4 subunit B.